The sequence spans 199 residues: Small ribosomal subunit protein uS4 (199 aa).

The S4 RNA-binding domain maps to 106 to 170 (RRLQTIVFRK…SPVANELHPI (65 aa)). The disordered stretch occupies residues 177–199 (PAQRSAEMKEGQGEASEEGETDE).

Belongs to the universal ribosomal protein uS4 family. Part of the 30S ribosomal subunit. Contacts protein S5. The interaction surface between S4 and S5 is involved in control of translational fidelity.

Its function is as follows. One of the primary rRNA binding proteins, it binds directly to 16S rRNA where it nucleates assembly of the body of the 30S subunit. Functionally, with S5 and S12 plays an important role in translational accuracy. The chain is Small ribosomal subunit protein uS4 from Thermoplasma acidophilum (strain ATCC 25905 / DSM 1728 / JCM 9062 / NBRC 15155 / AMRC-C165).